Here is a 20-residue protein sequence, read N- to C-terminus: Cytochrome c oxidase subunit 8B, mitochondrial (20 aa).

It belongs to the cytochrome c oxidase VIII family. In terms of assembly, component of the cytochrome c oxidase (complex IV, CIV), a multisubunit enzyme composed of 14 subunits. The complex is composed of a catalytic core of 3 subunits MT-CO1, MT-CO2 and MT-CO3, encoded in the mitochondrial DNA, and 11 supernumerary subunits COX4I, COX5A, COX5B, COX6A, COX6B, COX6C, COX7A, COX7B, COX7C, COX8 and NDUFA4, which are encoded in the nuclear genome. The complex exists as a monomer or a dimer and forms supercomplexes (SCs) in the inner mitochondrial membrane with NADH-ubiquinone oxidoreductase (complex I, CI) and ubiquinol-cytochrome c oxidoreductase (cytochrome b-c1 complex, complex III, CIII), resulting in different assemblies (supercomplex SCI(1)III(2)IV(1) and megacomplex MCI(2)III(2)IV(2)).

The protein localises to the mitochondrion inner membrane. It functions in the pathway energy metabolism; oxidative phosphorylation. In terms of biological role, component of the cytochrome c oxidase, the last enzyme in the mitochondrial electron transport chain which drives oxidative phosphorylation. The respiratory chain contains 3 multisubunit complexes succinate dehydrogenase (complex II, CII), ubiquinol-cytochrome c oxidoreductase (cytochrome b-c1 complex, complex III, CIII) and cytochrome c oxidase (complex IV, CIV), that cooperate to transfer electrons derived from NADH and succinate to molecular oxygen, creating an electrochemical gradient over the inner membrane that drives transmembrane transport and the ATP synthase. Cytochrome c oxidase is the component of the respiratory chain that catalyzes the reduction of oxygen to water. Electrons originating from reduced cytochrome c in the intermembrane space (IMS) are transferred via the dinuclear copper A center (CU(A)) of subunit 2 and heme A of subunit 1 to the active site in subunit 1, a binuclear center (BNC) formed by heme A3 and copper B (CU(B)). The BNC reduces molecular oxygen to 2 water molecules using 4 electrons from cytochrome c in the IMS and 4 protons from the mitochondrial matrix. The protein is Cytochrome c oxidase subunit 8B, mitochondrial of Thunnus obesus (Bigeye tuna).